A 350-amino-acid chain; its full sequence is Uroporphyrinogen decarboxylase (350 aa).

Residues 28–32 (RQAGR), Asp78, Tyr155, Ser210, and His325 contribute to the substrate site.

It belongs to the uroporphyrinogen decarboxylase family. As to quaternary structure, homodimer.

The protein localises to the cytoplasm. The catalysed reaction is uroporphyrinogen III + 4 H(+) = coproporphyrinogen III + 4 CO2. It functions in the pathway porphyrin-containing compound metabolism; protoporphyrin-IX biosynthesis; coproporphyrinogen-III from 5-aminolevulinate: step 4/4. Catalyzes the decarboxylation of four acetate groups of uroporphyrinogen-III to yield coproporphyrinogen-III. In Trichormus variabilis (strain ATCC 29413 / PCC 7937) (Anabaena variabilis), this protein is Uroporphyrinogen decarboxylase.